Here is a 373-residue protein sequence, read N- to C-terminus: Anhydro-N-acetylmuramic acid kinase (373 aa).

12–19 (GTSLDGVD) contacts ATP.

This sequence belongs to the anhydro-N-acetylmuramic acid kinase family.

The enzyme catalyses 1,6-anhydro-N-acetyl-beta-muramate + ATP + H2O = N-acetyl-D-muramate 6-phosphate + ADP + H(+). The protein operates within amino-sugar metabolism; 1,6-anhydro-N-acetylmuramate degradation. Its pathway is cell wall biogenesis; peptidoglycan recycling. Catalyzes the specific phosphorylation of 1,6-anhydro-N-acetylmuramic acid (anhMurNAc) with the simultaneous cleavage of the 1,6-anhydro ring, generating MurNAc-6-P. Is required for the utilization of anhMurNAc either imported from the medium or derived from its own cell wall murein, and thus plays a role in cell wall recycling. The protein is Anhydro-N-acetylmuramic acid kinase of Salmonella newport (strain SL254).